Reading from the N-terminus, the 265-residue chain is Phosphate import ATP-binding protein PstB 1 (265 aa).

One can recognise an ABC transporter domain in the interval 20–260; it reads LSTNDLSVLY…PKGKITEDYI (241 aa). 53–60 is an ATP binding site; that stretch reads GASGSGKS.

It belongs to the ABC transporter superfamily. Phosphate importer (TC 3.A.1.7) family. In terms of assembly, the complex is composed of two ATP-binding proteins (PstB), two transmembrane proteins (PstC and PstA) and a solute-binding protein (PstS).

It localises to the cell membrane. The catalysed reaction is phosphate(out) + ATP + H2O = ADP + 2 phosphate(in) + H(+). In terms of biological role, part of the ABC transporter complex PstSACB involved in phosphate import. Responsible for energy coupling to the transport system. This Lactobacillus acidophilus (strain ATCC 700396 / NCK56 / N2 / NCFM) protein is Phosphate import ATP-binding protein PstB 1.